The sequence spans 117 residues: Immunoglobulin heavy variable 5-51 (117 aa).

An N-terminal signal peptide occupies residues 1–19 (MGSTAILALLLAVLQGVCA). The segment at 20 to 44 (EVQLVQSGAEVKKPGESLKISCKGS) is framework-1. The region spanning 20 to 117 (EVQLVQSGAE…SDTAMYYCAR (98 aa)) is the Ig-like domain. C41 and C115 are oxidised to a cystine. The segment at 45–52 (GYSFTSYW) is complementarity-determining-1. The interval 53–69 (IGWVRQMPGKGLEWMGI) is framework-2. The interval 70-77 (IYPGDSDT) is complementarity-determining-2. The interval 78–115 (RYSPSFQGQVTISADKSISTAYLQWSSLKASDTAMYYC) is framework-3. Residues 116-117 (AR) are complementarity-determining-3.

Immunoglobulins are composed of two identical heavy chains and two identical light chains; disulfide-linked.

It is found in the secreted. The protein resides in the cell membrane. Functionally, v region of the variable domain of immunoglobulin heavy chains that participates in the antigen recognition. Immunoglobulins, also known as antibodies, are membrane-bound or secreted glycoproteins produced by B lymphocytes. In the recognition phase of humoral immunity, the membrane-bound immunoglobulins serve as receptors which, upon binding of a specific antigen, trigger the clonal expansion and differentiation of B lymphocytes into immunoglobulins-secreting plasma cells. Secreted immunoglobulins mediate the effector phase of humoral immunity, which results in the elimination of bound antigens. The antigen binding site is formed by the variable domain of one heavy chain, together with that of its associated light chain. Thus, each immunoglobulin has two antigen binding sites with remarkable affinity for a particular antigen. The variable domains are assembled by a process called V-(D)-J rearrangement and can then be subjected to somatic hypermutations which, after exposure to antigen and selection, allow affinity maturation for a particular antigen. This chain is Immunoglobulin heavy variable 5-51, found in Homo sapiens (Human).